The primary structure comprises 343 residues: E3 ubiquitin-protein ligase RNF113A (343 aa).

N-acetylalanine is present on alanine 2. The segment at 2 to 60 (AEQLSPGKTTDQVCTFLFKKPGRKVAAGRRKRPICNQESGDSSSSSDEGNTVVRPEKKR) is important for interaction with SNRNP200/BRR2. Serine 6 is subject to Phosphoserine. The span at 23–34 (GRKVAAGRRKRP) shows a compositional bias: basic residues. The tract at residues 23–95 (GRKVAAGRRK…EEEEENKSES (73 aa)) is disordered. Residues 39–50 (ESGDSSSSSDEG) show a composition bias toward low complexity. The segment at 50–61 (GNTVVRPEKKRA) is important for interaction with CXCR4. Serine 84 and serine 85 each carry phosphoserine. A C3H1-type zinc finger spans residues 196–224 (DYQPDICKDYKETGFCGFGDSCKFLHDRS). Serine 253 is subject to Phosphoserine. The RING-type zinc-finger motif lies at 262–300 (CFICRQTFQNPVVTKCRHYFCESCALQHFRTTPRCYVCD). Residues 323–343 (AEGGGASGFPEDPDEDPVPIT) are disordered. Acidic residues predominate over residues 333–343 (EDPDEDPVPIT).

Component of pre-catalytic and catalytic spliceosome complexes. Interacts (via N-terminus) with the spliceosome subunit SNRNP200/BRR2. Component of the minor spliceosome. Within this complex, interacts with SCNM1 and CRIPT.

The protein localises to the nucleus. The protein resides in the nucleus speckle. It carries out the reaction S-ubiquitinyl-[E2 ubiquitin-conjugating enzyme]-L-cysteine + [acceptor protein]-L-lysine = [E2 ubiquitin-conjugating enzyme]-L-cysteine + N(6)-ubiquitinyl-[acceptor protein]-L-lysine.. Its pathway is protein modification; protein ubiquitination. In terms of biological role, required for pre-mRNA splicing as component of the spliceosome. As a component of the minor spliceosome, involved in the splicing of U12-type introns in pre-mRNAs. E3 ubiquitin-protein ligase that catalyzes the transfer of ubiquitin onto target proteins. Catalyzes polyubiquitination of SNRNP200/BRR2 with non-canonical 'Lys-63'-linked polyubiquitin chains. Plays a role in DNA repair via its role in the synthesis of 'Lys-63'-linked polyubiquitin chains that recruit ALKBH3 and the ASCC complex to sites of DNA damage by alkylating agents. Ubiquitinates CXCR4, leading to its degradation, and thereby contributes to the termination of CXCR4 signaling. The polypeptide is E3 ubiquitin-protein ligase RNF113A (RNF113A) (Bos taurus (Bovine)).